A 421-amino-acid polypeptide reads, in one-letter code: Serine hydroxymethyltransferase (421 aa).

(6S)-5,6,7,8-tetrahydrofolate contacts are provided by residues Leu118 and 122–124; that span reads GHL. N6-(pyridoxal phosphate)lysine is present on Lys226. Glu242 serves as a coordination point for (6S)-5,6,7,8-tetrahydrofolate.

Belongs to the SHMT family. Homodimer. Requires pyridoxal 5'-phosphate as cofactor.

It localises to the cytoplasm. The catalysed reaction is (6R)-5,10-methylene-5,6,7,8-tetrahydrofolate + glycine + H2O = (6S)-5,6,7,8-tetrahydrofolate + L-serine. Its pathway is one-carbon metabolism; tetrahydrofolate interconversion. It participates in amino-acid biosynthesis; glycine biosynthesis; glycine from L-serine: step 1/1. Functionally, catalyzes the reversible interconversion of serine and glycine with tetrahydrofolate (THF) serving as the one-carbon carrier. This reaction serves as the major source of one-carbon groups required for the biosynthesis of purines, thymidylate, methionine, and other important biomolecules. Also exhibits THF-independent aldolase activity toward beta-hydroxyamino acids, producing glycine and aldehydes, via a retro-aldol mechanism. The chain is Serine hydroxymethyltransferase from Mycoplasmopsis synoviae (strain 53) (Mycoplasma synoviae).